A 513-amino-acid chain; its full sequence is Probable helicase MJ1565 (513 aa).

ATP contacts are provided by residues Arg-151, 160–165 (GMGKSN), and 467–468 (KV).

This sequence belongs to the HerA family.

The catalysed reaction is Couples ATP hydrolysis with the unwinding of duplex DNA at the replication fork by translocating in the 5'-3' direction. This creates two antiparallel DNA single strands (ssDNA). The leading ssDNA polymer is the template for DNA polymerase III holoenzyme which synthesizes a continuous strand.. It carries out the reaction ATP + H2O = ADP + phosphate + H(+). The enzyme catalyses Couples ATP hydrolysis with the unwinding of duplex DNA by translocating in the 3'-5' direction.. In terms of biological role, a probably bidirectional DNA helicase. The chain is Probable helicase MJ1565 from Methanocaldococcus jannaschii (strain ATCC 43067 / DSM 2661 / JAL-1 / JCM 10045 / NBRC 100440) (Methanococcus jannaschii).